The sequence spans 328 residues: uncharacterized protein (328 aa).

Coiled coils occupy residues 67–190 (FKEQ…VLEE) and 223–251 (MAQR…DNMM).

This is an uncharacterized protein from Mus musculus (Mouse).